A 267-amino-acid chain; its full sequence is Tetrahydromethanopterin S-methyltransferase subunit C (267 aa).

7 helical membrane passes run 19–39 (IMAIGAIGGLAGIYLGNFMPA), 40–60 (QFSFFGGLGAICAMVWGADAV), 75–95 (IGMISLGMGIVAALFGLSVGG), 96–116 (IAGPIVSFIAAAIIGAVIGVL), 131–151 (AMVEIAGAGTLVIIGLSVVIA), 162–182 (YVVANGYIALIFIIGGMGILH), and 221–241 (GLMAAGLNIAVGVIIWAWAFM).

Belongs to the MtrC family. The complex is composed of 8 subunits; MtrA, MtrB, MtrC, MtrD, MtrE, MtrF, MtrG and MtrH.

It localises to the cell membrane. It catalyses the reaction 5-methyl-5,6,7,8-tetrahydromethanopterin + coenzyme M + 2 Na(+)(in) = 5,6,7,8-tetrahydromethanopterin + methyl-coenzyme M + 2 Na(+)(out). The protein operates within one-carbon metabolism; methanogenesis from CO(2); methyl-coenzyme M from 5,10-methylene-5,6,7,8-tetrahydromethanopterin: step 2/2. Part of a complex that catalyzes the formation of methyl-coenzyme M and tetrahydromethanopterin from coenzyme M and methyl-tetrahydromethanopterin. This is an energy-conserving, sodium-ion translocating step. The chain is Tetrahydromethanopterin S-methyltransferase subunit C from Methanosarcina acetivorans (strain ATCC 35395 / DSM 2834 / JCM 12185 / C2A).